The primary structure comprises 218 residues: UPF0329 protein ECU10_1860 (218 aa).

This sequence belongs to the UPF0329 family.

This Encephalitozoon cuniculi (strain GB-M1) (Microsporidian parasite) protein is UPF0329 protein ECU10_1860.